A 127-amino-acid chain; its full sequence is Small ribosomal subunit protein bS6 (127 aa).

It belongs to the bacterial ribosomal protein bS6 family.

Binds together with bS18 to 16S ribosomal RNA. The polypeptide is Small ribosomal subunit protein bS6 (Buchnera aphidicola subsp. Cinara cedri (strain Cc)).